Here is a 1295-residue protein sequence, read N- to C-terminus: Phosphoribosylformylglycinamidine synthase (1295 aa).

A disordered region spans residues 305-327 (WPGAATGSGGEIRDEGATGRGAK). Residues 307–318 (GAATGSGGEIRD), 386–388 (TGY), and Ala-678 each bind ATP. Asp-679, Glu-718, Asn-722, and Asp-884 together coordinate Mg(2+). Ser-886 contacts ATP. Residues 1042–1295 (VAVLREQGVN…IFRNARKQLG (254 aa)) enclose the Glutamine amidotransferase type-1 domain. Cys-1135 serves as the catalytic Nucleophile. Residues His-1260 and Glu-1262 contribute to the active site.

It in the N-terminal section; belongs to the FGAMS family. Monomer.

The protein resides in the cytoplasm. The enzyme catalyses N(2)-formyl-N(1)-(5-phospho-beta-D-ribosyl)glycinamide + L-glutamine + ATP + H2O = 2-formamido-N(1)-(5-O-phospho-beta-D-ribosyl)acetamidine + L-glutamate + ADP + phosphate + H(+). The protein operates within purine metabolism; IMP biosynthesis via de novo pathway; 5-amino-1-(5-phospho-D-ribosyl)imidazole from N(2)-formyl-N(1)-(5-phospho-D-ribosyl)glycinamide: step 1/2. In terms of biological role, phosphoribosylformylglycinamidine synthase involved in the purines biosynthetic pathway. Catalyzes the ATP-dependent conversion of formylglycinamide ribonucleotide (FGAR) and glutamine to yield formylglycinamidine ribonucleotide (FGAM) and glutamate. This chain is Phosphoribosylformylglycinamidine synthase, found in Salmonella paratyphi A (strain ATCC 9150 / SARB42).